A 305-amino-acid polypeptide reads, in one-letter code: MQPADASVIERFLDRFWAEQGVARQTLESYRRDLEGLARWRDGAGGGLLGIDRAALFDYLRWRTRANYSPRSTARLLSTLRAFYGLCLRDGARSDDPTALIDPPHLPRSLPKALTESQIEALLAAPDLDTPAGLRDRAMLELMYAAGLRVSELVNLPAVGVNLRQGVLRVTGKGSKDRLVPLGEESQHWLERYLREARPLLAANKPVAAVDGQVPLFIDVSRQPLSRQQFWALVKRYAAVAGIDPATVSPHGLRHSFATHLLNHGADLRALQMLLGHSSLSTTQIYTLVARQHLQKLHASHHPRG.

The region spanning 3–88 (PADASVIERF…TLRAFYGLCL (86 aa)) is the Core-binding (CB) domain. Residues 109-299 (SLPKALTESQ…ARQHLQKLHA (191 aa)) form the Tyr recombinase domain. Residues R149, K173, H251, R254, and H277 contribute to the active site. Y286 serves as the catalytic O-(3'-phospho-DNA)-tyrosine intermediate.

This sequence belongs to the 'phage' integrase family. XerD subfamily. In terms of assembly, forms a cyclic heterotetrameric complex composed of two molecules of XerC and two molecules of XerD.

The protein localises to the cytoplasm. In terms of biological role, site-specific tyrosine recombinase, which acts by catalyzing the cutting and rejoining of the recombining DNA molecules. The XerC-XerD complex is essential to convert dimers of the bacterial chromosome into monomers to permit their segregation at cell division. It also contributes to the segregational stability of plasmids. This is Tyrosine recombinase XerD from Xanthomonas axonopodis pv. citri (strain 306).